We begin with the raw amino-acid sequence, 395 residues long: RNA pseudouridine synthase 7 (395 aa).

Positions 1–21 (MKRKQQEDDNDDGVEKAVSPV) are disordered. The region spanning 74 to 136 (KTIVDLFADE…HEPPVMIDDV (63 aa)) is the S4 RNA-binding domain. The active site involves Asp-187. A compositionally biased stretch (polar residues) spans 244-255 (EGRSTAEDANSS). A disordered region spans residues 244 to 263 (EGRSTAEDANSSGDDKKVKG).

It belongs to the pseudouridine synthase RluA family.

The catalysed reaction is a uridine in RNA = a pseudouridine in RNA. In Arabidopsis thaliana (Mouse-ear cress), this protein is RNA pseudouridine synthase 7.